The primary structure comprises 327 residues: Protein CONSERVED IN THE GREEN LINEAGE AND DIATOMS 27, chloroplastic (327 aa).

The transit peptide at 1–59 (MLRLIVNYPLIPKISHRVCSNSSSKLGSYYDSSSIIKYGGISDVVGKKQELFLSVSVKA) directs the protein to the chloroplast. The tract at residues 66–88 (NGGGSMSFSGQSWDPSSEIEVPS) is disordered. 3 helical membrane-spanning segments follow: residues 119-139 (LGGLWLVTFTVLGVPVAAASF), 148-168 (FILAAGTGTLFLVSLIVLRIY), and 225-245 (LIGTGALLVSAFVLFVFATPV).

In terms of tissue distribution, mostly expressed in seeds, leaves and flowers, and, to a lower extent, in roots.

The protein resides in the membrane. Its subcellular location is the plastid. It is found in the chloroplast. Required for growth in low iron conditions. In Arabidopsis thaliana (Mouse-ear cress), this protein is Protein CONSERVED IN THE GREEN LINEAGE AND DIATOMS 27, chloroplastic.